We begin with the raw amino-acid sequence, 348 residues long: MNDRQAALDQALKQIEKQFGKGSIMKLGEHSDQNISTISSGSLALDIALGVGGYPRGRIIEVYGPESSGKTTVALHAIAEVQAQGGTAAFIDAEHALDPAYAKNLGVNIDELLLSQPDTGEQALEIAEALVRSGAVDMLVIDSVAALVPRAEIEGEMGDAHVGLQARLMSQALRKLSGVINKSKTIAIFINQIREKVGVMFGNPEITPGGRALKFYSTVRLEVRRAEQLKQGTDVMGNKTKIKVVKNKVAPPFRIAEVDIMYGEGISREGELVDMAAEVDVINKSGSWYSYKEERIGQGRENAKQYLKEHTDIRDEISKRVREEYEIDGSSKEPLDEKEETLSLLDDE.

64 to 71 (GPESSGKT) serves as a coordination point for ATP. A compositionally biased stretch (basic and acidic residues) spans 325–335 (YEIDGSSKEPL). The interval 325 to 348 (YEIDGSSKEPLDEKEETLSLLDDE) is disordered.

This sequence belongs to the RecA family.

It is found in the cytoplasm. Functionally, can catalyze the hydrolysis of ATP in the presence of single-stranded DNA, the ATP-dependent uptake of single-stranded DNA by duplex DNA, and the ATP-dependent hybridization of homologous single-stranded DNAs. It interacts with LexA causing its activation and leading to its autocatalytic cleavage. This is Protein RecA from Listeria monocytogenes serotype 1/2a (strain 10403S).